A 329-amino-acid polypeptide reads, in one-letter code: Uroporphyrinogen decarboxylase (329 aa).

Residues 22–26 (RQVGR), Asp71, Tyr140, Ser195, and His307 each bind substrate.

This sequence belongs to the uroporphyrinogen decarboxylase family. In terms of assembly, homodimer.

The protein localises to the cytoplasm. It catalyses the reaction uroporphyrinogen III + 4 H(+) = coproporphyrinogen III + 4 CO2. It participates in porphyrin-containing compound metabolism; protoporphyrin-IX biosynthesis; coproporphyrinogen-III from 5-aminolevulinate: step 4/4. Its function is as follows. Catalyzes the decarboxylation of four acetate groups of uroporphyrinogen-III to yield coproporphyrinogen-III. The protein is Uroporphyrinogen decarboxylase of Chlamydia pneumoniae (Chlamydophila pneumoniae).